The chain runs to 346 residues: Growth hormone-inducible transmembrane protein (346 aa).

The transit peptide at 1 to 45 (MLAARLVCLRTLPSRVFQPTFITKASPLVKNSITKNQWLLTPSRE) directs the protein to the mitochondrion. The Mitochondrial matrix segment spans residues 46–83 (YATKTRIRTHRGKTGQELKEAALEPSLEKVFKIDQMGK). Residues 84 to 104 (WFVAGGAAVGLGALCYYGLGM) traverse the membrane as a helical segment. At 105-126 (SNEIGAIEKAVIWPQYVKDRIH) the chain is on the mitochondrial intermembrane side. The chain crosses the membrane as a helical span at residues 127 to 147 (STYMYLAGSIGLTALSALALA). Over 148 to 160 (RSPALMNFMMTGS) the chain is Mitochondrial matrix. A helical transmembrane segment spans residues 161 to 181 (WMTIGATFAAMIGAGMLVQSI). The Mitochondrial intermembrane portion of the chain corresponds to 182–191 (SYEQSPGPKH). A helical membrane pass occupies residues 192–212 (LAWMLHSGVMGAVVAPLTILG). Residues 213 to 214 (GP) are Mitochondrial matrix-facing. A helical transmembrane segment spans residues 215-235 (LLLRAAWYTAGIVGGLSTVAM). Residues 236 to 245 (CAPSEKFLNM) are Mitochondrial intermembrane-facing. The helical transmembrane segment at 246–266 (GAPLGVGLGLVFASSLGSMFL) threads the bilayer. The Mitochondrial matrix portion of the chain corresponds to 267–272 (PPTSVA). A helical transmembrane segment spans residues 273–293 (GATLYSVAMYGGLVLFSMFLL). The Mitochondrial intermembrane segment spans residues 294-346 (YDTQKVVKRAEITPAYGAQKYDPINSMLTIYMDTLNIFMRVATMLATGSNRKK).

This sequence belongs to the BI1 family. In terms of assembly, interacts with LETM1 and AFG3L2. In terms of processing, undergoes AFG3L2-mediated proteolytic degradation, upon hyperpolarization of mitochondria.

The protein resides in the mitochondrion inner membrane. Plays an important role in maintenance of mitochondrial morphology and in mediating either calcium or potassium/proton antiport. Mediates proton-dependent calcium efflux from mitochondrion. Also functions as an electroneutral mitochondrial proton/potassium exchanger. Required for the mitochondrial tubular network and cristae organization. Involved in apoptotic release of cytochrome c. Inhibits AFG3L2 proteolytic activity, stimulating respiration and stabilizing respiratory enzymes in actively respiring mitochondria. However, when mitochondria become hyperpolarized, GHITM loses its inhibitory activity toward AFG3L2 and the now active AFG3L2 turns first on GHITM and, if hyperpolarization persists, on other proteins of the mitochondria, leading to a broad remodeling of the proteome. In Rattus norvegicus (Rat), this protein is Growth hormone-inducible transmembrane protein (Ghitm).